Reading from the N-terminus, the 360-residue chain is Ribosomal RNA large subunit methyltransferase F (360 aa).

Positions 1-38 (MTRSTTPPMRAKHSSAKRSPSRSAAKVNPVSVKPNKPL) are disordered. Residues 10-20 (RAKHSSAKRSP) are compositionally biased toward basic residues.

The protein belongs to the methyltransferase superfamily. METTL16/RlmF family.

It is found in the cytoplasm. It carries out the reaction adenosine(1618) in 23S rRNA + S-adenosyl-L-methionine = N(6)-methyladenosine(1618) in 23S rRNA + S-adenosyl-L-homocysteine + H(+). Its function is as follows. Specifically methylates the adenine in position 1618 of 23S rRNA. This is Ribosomal RNA large subunit methyltransferase F from Shewanella frigidimarina (strain NCIMB 400).